The sequence spans 76 residues: Exodeoxyribonuclease 7 small subunit (76 aa).

Belongs to the XseB family. In terms of assembly, heterooligomer composed of large and small subunits.

It is found in the cytoplasm. It carries out the reaction Exonucleolytic cleavage in either 5'- to 3'- or 3'- to 5'-direction to yield nucleoside 5'-phosphates.. Its function is as follows. Bidirectionally degrades single-stranded DNA into large acid-insoluble oligonucleotides, which are then degraded further into small acid-soluble oligonucleotides. This chain is Exodeoxyribonuclease 7 small subunit, found in Staphylococcus haemolyticus (strain JCSC1435).